An 872-amino-acid chain; its full sequence is HTH-type transcriptional regulator AlkS (872 aa).

Residues leucine 805 to glycine 870 form the HTH luxR-type domain. The H-T-H motif DNA-binding region spans asparagine 829 to lysine 848.

The protein operates within hydrocarbon metabolism; alkane degradation. In terms of biological role, this protein activates the expression of AlkB1 in the presence of alkanes. This Alcanivorax borkumensis (strain ATCC 700651 / DSM 11573 / NCIMB 13689 / SK2) protein is HTH-type transcriptional regulator AlkS (alkS).